A 185-amino-acid chain; its full sequence is HTH-type transcriptional regulator SA2364 (185 aa).

Residues 6-66 (KENRQRIEEI…YVIQRDLDIF (61 aa)) form the HTH tetR-type domain. Residues 29–48 (SMNRIAKELGIGMGTLYRHF) constitute a DNA-binding region (H-T-H motif).

This is HTH-type transcriptional regulator SA2364 from Staphylococcus aureus (strain N315).